A 252-amino-acid chain; its full sequence is Type III pantothenate kinase (252 aa).

6 to 13 contacts ATP; the sequence is DIGNTSTA. Substrate is bound at residue 104–107; that stretch reads GADR. Aspartate 106 functions as the Proton acceptor in the catalytic mechanism. Position 128 (aspartate 128) interacts with K(+). Threonine 131 contributes to the ATP binding site. Residue threonine 183 coordinates substrate.

This sequence belongs to the type III pantothenate kinase family. As to quaternary structure, homodimer. NH4(+) is required as a cofactor. It depends on K(+) as a cofactor.

The protein resides in the cytoplasm. The enzyme catalyses (R)-pantothenate + ATP = (R)-4'-phosphopantothenate + ADP + H(+). It functions in the pathway cofactor biosynthesis; coenzyme A biosynthesis; CoA from (R)-pantothenate: step 1/5. In terms of biological role, catalyzes the phosphorylation of pantothenate (Pan), the first step in CoA biosynthesis. This chain is Type III pantothenate kinase, found in Thermus thermophilus (strain ATCC BAA-163 / DSM 7039 / HB27).